A 276-amino-acid chain; its full sequence is Undecaprenyl-diphosphatase (276 aa).

The next 8 helical transmembrane spans lie at 1–21 (MELY…FLPV), 40–60 (ALSF…LVFF), 93–113 (VRLA…GLIL), 120–140 (LFSS…FLWL), 154–174 (IGFG…IPGI), 199–219 (FLLS…ESFA), 227–247 (VTLL…VALL), and 255–275 (FYLF…AGFV).

Belongs to the UppP family.

The protein localises to the cell inner membrane. It carries out the reaction di-trans,octa-cis-undecaprenyl diphosphate + H2O = di-trans,octa-cis-undecaprenyl phosphate + phosphate + H(+). Its function is as follows. Catalyzes the dephosphorylation of undecaprenyl diphosphate (UPP). Confers resistance to bacitracin. The sequence is that of Undecaprenyl-diphosphatase from Desulforapulum autotrophicum (strain ATCC 43914 / DSM 3382 / VKM B-1955 / HRM2) (Desulfobacterium autotrophicum).